The primary structure comprises 500 residues: Beta-glucosidase 28 (500 aa).

An N-terminal signal peptide occupies residues 1-24 (MDRRLLLSALLFIALACSSNRVHG). Glutamine 45 is a binding site for a beta-D-glucoside. Asparagine 111 carries an N-linked (GlcNAc...) asparagine glycan. Residues histidine 146 and 191–192 (NE) each bind a beta-D-glucoside. The active-site Proton donor is glutamate 192. Cysteine 211 and cysteine 219 are disulfide-bonded. A beta-D-glucoside is bound at residue tyrosine 337. A glycan (N-linked (GlcNAc...) asparagine) is linked at asparagine 362. Glutamate 408 contacts a beta-D-glucoside. Glutamate 408 serves as the catalytic Nucleophile. N-linked (GlcNAc...) asparagine glycosylation is found at asparagine 409, asparagine 415, and asparagine 416. Residues tryptophan 457, 464 to 465 (EF), and phenylalanine 473 contribute to the a beta-D-glucoside site.

Belongs to the glycosyl hydrolase 1 family.

It carries out the reaction Hydrolysis of terminal, non-reducing beta-D-glucosyl residues with release of beta-D-glucose.. The protein is Beta-glucosidase 28 (BGLU28) of Oryza sativa subsp. japonica (Rice).